Consider the following 57-residue polypeptide: UPF0391 membrane protein NE0130 (57 aa).

The next 2 membrane-spanning stretches (helical) occupy residues methionine 1–arginine 21 and phenylalanine 33–isoleucine 53.

The protein belongs to the UPF0391 family.

The protein localises to the cell membrane. In Nitrosomonas europaea (strain ATCC 19718 / CIP 103999 / KCTC 2705 / NBRC 14298), this protein is UPF0391 membrane protein NE0130.